The following is a 192-amino-acid chain: Ion-translocating oxidoreductase complex subunit B (192 aa).

The segment at 1–26 is hydrophobic; the sequence is MNAIWIAVAAVSLLGLAFGAILGYAS. Residues 32-91 enclose the 4Fe-4S domain; it reads EDDPVVEKIDEILPQSQCGQCGYPGCRPYAEAISCNGEKINRCAPGGEAVMLKIAELLNV. Cys-49, Cys-52, Cys-57, Cys-74, Cys-117, Cys-120, Cys-123, Cys-127, Cys-147, Cys-150, Cys-153, and Cys-157 together coordinate [4Fe-4S] cluster. 2 consecutive 4Fe-4S ferredoxin-type domains span residues 108–137 and 138–167; these read MVAV…GATR and AMHT…LQPV.

This sequence belongs to the 4Fe4S bacterial-type ferredoxin family. RnfB subfamily. In terms of assembly, the complex is composed of six subunits: RsxA, RsxB, RsxC, RsxD, RsxE and RsxG. [4Fe-4S] cluster serves as cofactor.

The protein localises to the cell inner membrane. Functionally, part of a membrane-bound complex that couples electron transfer with translocation of ions across the membrane. Required to maintain the reduced state of SoxR. This Shigella dysenteriae serotype 1 (strain Sd197) protein is Ion-translocating oxidoreductase complex subunit B.